Consider the following 256-residue polypeptide: Ubiquinone/menaquinone biosynthesis C-methyltransferase UbiE (256 aa).

S-adenosyl-L-methionine is bound by residues Thr78 and Asp99.

It belongs to the class I-like SAM-binding methyltransferase superfamily. MenG/UbiE family.

The catalysed reaction is a 2-demethylmenaquinol + S-adenosyl-L-methionine = a menaquinol + S-adenosyl-L-homocysteine + H(+). The enzyme catalyses a 2-methoxy-6-(all-trans-polyprenyl)benzene-1,4-diol + S-adenosyl-L-methionine = a 5-methoxy-2-methyl-3-(all-trans-polyprenyl)benzene-1,4-diol + S-adenosyl-L-homocysteine + H(+). It functions in the pathway quinol/quinone metabolism; menaquinone biosynthesis; menaquinol from 1,4-dihydroxy-2-naphthoate: step 2/2. The protein operates within cofactor biosynthesis; ubiquinone biosynthesis. Functionally, methyltransferase required for the conversion of demethylmenaquinol (DMKH2) to menaquinol (MKH2) and the conversion of 2-polyprenyl-6-methoxy-1,4-benzoquinol (DDMQH2) to 2-polyprenyl-3-methyl-6-methoxy-1,4-benzoquinol (DMQH2). The polypeptide is Ubiquinone/menaquinone biosynthesis C-methyltransferase UbiE (Geobacter sulfurreducens (strain ATCC 51573 / DSM 12127 / PCA)).